Reading from the N-terminus, the 474-residue chain is UDP-N-acetylmuramoyl-L-alanyl-D-glutamate--2,6-diaminopimelate ligase (474 aa).

Ser21 provides a ligand contact to UDP-N-acetyl-alpha-D-muramoyl-L-alanyl-D-glutamate. Position 93–99 (93–99 (GTNGKSS)) interacts with ATP. Residues 139–140 (TT), Ser166, Gln172, and Arg174 each bind UDP-N-acetyl-alpha-D-muramoyl-L-alanyl-D-glutamate. N6-carboxylysine is present on Lys206. Residues Arg367, 391 to 394 (DNPR), Gly441, and Glu445 contribute to the meso-2,6-diaminopimelate site. A Meso-diaminopimelate recognition motif motif is present at residues 391–394 (DNPR).

This sequence belongs to the MurCDEF family. MurE subfamily. The cofactor is Mg(2+). In terms of processing, carboxylation is probably crucial for Mg(2+) binding and, consequently, for the gamma-phosphate positioning of ATP.

It localises to the cytoplasm. The enzyme catalyses UDP-N-acetyl-alpha-D-muramoyl-L-alanyl-D-glutamate + meso-2,6-diaminopimelate + ATP = UDP-N-acetyl-alpha-D-muramoyl-L-alanyl-gamma-D-glutamyl-meso-2,6-diaminopimelate + ADP + phosphate + H(+). It functions in the pathway cell wall biogenesis; peptidoglycan biosynthesis. Functionally, catalyzes the addition of meso-diaminopimelic acid to the nucleotide precursor UDP-N-acetylmuramoyl-L-alanyl-D-glutamate (UMAG) in the biosynthesis of bacterial cell-wall peptidoglycan. This chain is UDP-N-acetylmuramoyl-L-alanyl-D-glutamate--2,6-diaminopimelate ligase, found in Rickettsia bellii (strain RML369-C).